The following is a 100-amino-acid chain: Succinate dehydrogenase assembly factor 4, mitochondrial (100 aa).

A mitochondrion-targeting transit peptide spans 1 to 31; sequence MFNRNLRAVILKNYNKALTRCLHDAGNLKRP. The segment at 24–100 is disordered; sequence DAGNLKRPTP…YSYEGRVTDF (77 aa). Composition is skewed to basic and acidic residues over residues 36–68 and 85–100; these read LPKE…KDFE and PTVH…VTDF.

It belongs to the SDHAF4 family. Interacts with sdh1 in its FAD-bound form.

It localises to the mitochondrion matrix. Functionally, plays an essential role in the assembly of succinate dehydrogenase (SDH), an enzyme complex (also referred to as respiratory complex II) that is a component of both the tricarboxylic acid (TCA) cycle and the mitochondrial electron transport chain, and which couples the oxidation of succinate to fumarate with the reduction of ubiquinone (coenzyme Q) to ubiquinol. Binds to the flavoprotein subunit sdh1 in its FAD-bound form, blocking the generation of excess reactive oxygen species (ROS) and facilitating its assembly with the iron-sulfur protein subunit sdh2 into the SDH catalytic dimer. The sequence is that of Succinate dehydrogenase assembly factor 4, mitochondrial from Schizosaccharomyces pombe (strain 972 / ATCC 24843) (Fission yeast).